The chain runs to 418 residues: Queuine tRNA-ribosyltransferase accessory subunit 2 (418 aa).

Positions 325, 327, 330, and 356 each coordinate Zn(2+).

This sequence belongs to the queuine tRNA-ribosyltransferase family. QTRT2 subfamily. Heterodimer of a catalytic subunit and an accessory subunit. Zn(2+) is required as a cofactor.

Its subcellular location is the cytoplasm. Functionally, non-catalytic subunit of the queuine tRNA-ribosyltransferase (TGT) that catalyzes the base-exchange of a guanine (G) residue with queuine (Q) at position 34 (anticodon wobble position) in tRNAs with GU(N) anticodons (tRNA-Asp, -Asn, -His and -Tyr), resulting in the hypermodified nucleoside queuosine (7-(((4,5-cis-dihydroxy-2-cyclopenten-1-yl)amino)methyl)-7-deazaguanosine). This is Queuine tRNA-ribosyltransferase accessory subunit 2 from Drosophila erecta (Fruit fly).